The following is a 606-amino-acid chain: Zinc metalloproteinase-disintegrin-like HF3 (606 aa).

A signal peptide spans 1 to 20 (MIQVLLVTICLAAFPYQGSS). Positions 21 to 190 (IILESGNVND…KKASQLVVTA (170 aa)) are excised as a propeptide. The 197-residue stretch at 199 to 395 (KYIELVILAD…YKPQCILNEP (197 aa)) folds into the Peptidase M12B domain. A Ca(2+)-binding site is contributed by Glu202. Asn259 is a glycosylation site (N-linked (GlcNAc...) asparagine). Asp286 lines the Ca(2+) pocket. Intrachain disulfides connect Cys310/Cys390, Cys350/Cys374, and Cys352/Cys357. The N-linked (GlcNAc...) asparagine glycan is linked to Asn313. His335 is a Zn(2+) binding site. The active site involves Glu336. His339 and His345 together coordinate Zn(2+). N-linked (GlcNAc...) asparagine glycosylation is present at Asn373. The Ca(2+) site is built by Cys390, Asn393, Val405, Asn408, Leu410, Glu412, Glu415, and Asp418. The 87-residue stretch at 403–489 (PPVCGNELLE…DCPTDDFKRN (87 aa)) folds into the Disintegrin domain. 14 disulfides stabilise this stretch: Cys406/Cys435, Cys417/Cys430, Cys419/Cys425, Cys429/Cys452, Cys443/Cys449, Cys448/Cys474, Cys461/Cys481, Cys468/Cys500, Cys493/Cys505, Cys512/Cys562, Cys527/Cys569, Cys540/Cys550, Cys557/Cys594, and Cys588/Cys599. Positions 467–469 (ECD) match the D/ECD-tripeptide motif. Asp469, Glu472, and Asp484 together coordinate Ca(2+). Asn519 carries N-linked (GlcNAc...) asparagine glycosylation. Residue Asn584 is glycosylated (N-linked (GlcNAc...) asparagine).

This sequence belongs to the venom metalloproteinase (M12B) family. P-III subfamily. P-IIIa sub-subfamily. In terms of assembly, monomer. Zn(2+) serves as cofactor. As to expression, expressed by the venom gland.

Its subcellular location is the secreted. Its function is as follows. The metalloproteinase-disintegrin-like HF3 is a potent hemorrhagic toxin that activates macrophages for phagocytosis through integrin alpha-M/beta-2 (ITGAM/ITGB2). It inhibits collagen-induced platelet aggregation. This protein shows cleavage specificity for substrate for leucine at P1' position, followed by hydrophobic residues in P2'. In Bothrops jararaca (Jararaca), this protein is Zinc metalloproteinase-disintegrin-like HF3.